A 28-amino-acid chain; its full sequence is Omega-agatoxin-Aa2a (28 aa).

The protein belongs to the neurotoxin 04 (omega-agtx) family. 03 (type II/III omega-agtx) subfamily. In terms of tissue distribution, expressed by the venom gland.

The protein localises to the secreted. Functionally, omega-agatoxin are antagonist of voltage-gated calcium channels. They block insect neuromuscular transmission presynaptically. Potent blocker of N-type calcium channels (Cav2.2/CACNA1B). This chain is Omega-agatoxin-Aa2a, found in Agelenopsis aperta (North American funnel-web spider).